The chain runs to 256 residues: Leucine-rich repeat-containing protein 18 (256 aa).

8 LRR repeats span residues 28–49 (GRKR…ILRL), 51–72 (EIDE…ISKF), 74–95 (NLRW…IGQM), 97–118 (SLLF…VELN), 122–144 (NIRT…GALK), 145–167 (ELHE…SKLP), 168–189 (KLKK…DMFV), and 194–215 (RLEN…QKCQ).

It is found in the cytoplasm. May be involved in the regulation of spermatogenesis and sperm maturation. The chain is Leucine-rich repeat-containing protein 18 (Lrrc18) from Rattus norvegicus (Rat).